A 214-amino-acid polypeptide reads, in one-letter code: uncharacterized protein (214 aa).

An N-terminal signal peptide occupies residues 1 to 17; sequence MWCFIVFLTIFLPTLEG. N-linked (GlcNAc...) asparagine glycosylation is found at N88 and N139.

Component of the acid-insoluble organic matrix of calcified layers of the shell (at protein level).

It localises to the secreted. This is an uncharacterized protein from Lottia gigantea (Giant owl limpet).